Reading from the N-terminus, the 240-residue chain is Triosephosphate isomerase (240 aa).

Substrate is bound at residue Asn8–Lys10. His93 acts as the Electrophile in catalysis. Glu160 (proton acceptor) is an active-site residue. Gly166 serves as a coordination point for substrate.

It belongs to the triosephosphate isomerase family. In terms of assembly, homodimer.

The protein localises to the cytoplasm. It catalyses the reaction D-glyceraldehyde 3-phosphate = dihydroxyacetone phosphate. The protein operates within carbohydrate biosynthesis; gluconeogenesis. It participates in carbohydrate degradation; glycolysis; D-glyceraldehyde 3-phosphate from glycerone phosphate: step 1/1. Functionally, involved in the gluconeogenesis. Catalyzes stereospecifically the conversion of dihydroxyacetone phosphate (DHAP) to D-glyceraldehyde-3-phosphate (G3P). The sequence is that of Triosephosphate isomerase from Ehrlichia chaffeensis (strain ATCC CRL-10679 / Arkansas).